A 178-amino-acid chain; its full sequence is MLDPVAESLGYEIVRLRLMGGTEQRRLQIMAEHPLLEDGSGGDMNVEDCAKLSRAVSEVLDAADPIAGEYTLEVSSPGIDRPLTRLKDFDDYAGLEARIELDRVAEGRKRFKGELAGVEDDQVGLNIEGEDDVTVYFPFAWVIDAKLVMTDALMERGAKQRAARLESDNEDLSESEED.

Belongs to the RimP family.

The protein localises to the cytoplasm. Its function is as follows. Required for maturation of 30S ribosomal subunits. The sequence is that of Ribosome maturation factor RimP from Caulobacter vibrioides (strain ATCC 19089 / CIP 103742 / CB 15) (Caulobacter crescentus).